The sequence spans 457 residues: Bifunctional protein GlmU (457 aa).

Residues 1-227 (MTQLSVVILA…FMEVEGANNR (227 aa)) are pyrophosphorylase. UDP-N-acetyl-alpha-D-glucosamine-binding positions include 9–12 (LAAG), K23, Q74, 79–80 (GT), 101–103 (YGD), G138, E152, N167, and N225. Position 103 (D103) interacts with Mg(2+). N225 is a binding site for Mg(2+). The segment at 228–248 (LQLAALERFYQKTQAEKLLLA) is linker. The interval 249–457 (GVRLIDPARF…QRPTKKKIAD (209 aa)) is N-acetyltransferase. UDP-N-acetyl-alpha-D-glucosamine-binding residues include R331 and K349. Catalysis depends on H361, which acts as the Proton acceptor. Residues Y364 and N375 each contribute to the UDP-N-acetyl-alpha-D-glucosamine site. Residues A378, 384-385 (NY), S403, A421, and R438 each bind acetyl-CoA.

The protein in the N-terminal section; belongs to the N-acetylglucosamine-1-phosphate uridyltransferase family. This sequence in the C-terminal section; belongs to the transferase hexapeptide repeat family. As to quaternary structure, homotrimer. Mg(2+) serves as cofactor.

The protein resides in the cytoplasm. The enzyme catalyses alpha-D-glucosamine 1-phosphate + acetyl-CoA = N-acetyl-alpha-D-glucosamine 1-phosphate + CoA + H(+). The catalysed reaction is N-acetyl-alpha-D-glucosamine 1-phosphate + UTP + H(+) = UDP-N-acetyl-alpha-D-glucosamine + diphosphate. It participates in nucleotide-sugar biosynthesis; UDP-N-acetyl-alpha-D-glucosamine biosynthesis; N-acetyl-alpha-D-glucosamine 1-phosphate from alpha-D-glucosamine 6-phosphate (route II): step 2/2. The protein operates within nucleotide-sugar biosynthesis; UDP-N-acetyl-alpha-D-glucosamine biosynthesis; UDP-N-acetyl-alpha-D-glucosamine from N-acetyl-alpha-D-glucosamine 1-phosphate: step 1/1. It functions in the pathway bacterial outer membrane biogenesis; LPS lipid A biosynthesis. Functionally, catalyzes the last two sequential reactions in the de novo biosynthetic pathway for UDP-N-acetylglucosamine (UDP-GlcNAc). The C-terminal domain catalyzes the transfer of acetyl group from acetyl coenzyme A to glucosamine-1-phosphate (GlcN-1-P) to produce N-acetylglucosamine-1-phosphate (GlcNAc-1-P), which is converted into UDP-GlcNAc by the transfer of uridine 5-monophosphate (from uridine 5-triphosphate), a reaction catalyzed by the N-terminal domain. This Actinobacillus pleuropneumoniae serotype 5b (strain L20) protein is Bifunctional protein GlmU.